A 488-amino-acid polypeptide reads, in one-letter code: MARRNYKVLYVSGEVSPFVRVSSLADFMASFPQALEEEGFEARIMMPKYGIINDRKFRLHDVLRLSDIEVPLKEKTEMLHVKVTALPSSKIQTYFLYNEKHFKRSGLFSDLQLGGDHKGSAEKLIFFSVGVMETLVRLGWQPDIIHCNDWHAGLVPLLARTRYAKHDFFKKVKIVQSVHNVYRQGVFQPKMFQKHLDPEVFDGLEREGDDINLLATGIKYADLVTTTSPSYAKQIASDPESSFGMDKALKACKDRFHGILNGMDTRQWNPSSDKLIKKRYSAAQPELKLEDKKVLLEEVGLPFSEETPVVGVITTFDDVQGMGLLKESLSKLLELDLQLIVSGSGNKEFEQELRDLVEEHPEKLAVNTDFTDAFYHQMIAGLDMLIMPSRIESCGMKQMFAMNYGTVPIAYAGGGIVETIEEVSGDKGTGFVFTDYTAEALTAKLGEALSMFDDKERWAELMREGMERDFSWSASAEQYAELYREILG.

Arg-20 serves as a coordination point for ADP-alpha-D-glucose.

The protein belongs to the glycosyltransferase 1 family. Bacterial/plant glycogen synthase subfamily.

The catalysed reaction is [(1-&gt;4)-alpha-D-glucosyl](n) + ADP-alpha-D-glucose = [(1-&gt;4)-alpha-D-glucosyl](n+1) + ADP + H(+). It participates in glycan biosynthesis; glycogen biosynthesis. Its function is as follows. Synthesizes alpha-1,4-glucan chains using ADP-glucose. This Chlorobaculum parvum (strain DSM 263 / NCIMB 8327) (Chlorobium vibrioforme subsp. thiosulfatophilum) protein is Glycogen synthase.